The primary structure comprises 353 residues: Photosystem II D2 protein (353 aa).

Thr-2 is modified (N-acetylthreonine). A Phosphothreonine modification is found at Thr-2. The chain crosses the membrane as a helical span at residues 41–61 (CAYFAVGGWFTGTTFVTSWYT). A chlorophyll a-binding site is contributed by His-118. Residues 125 to 141 (GFMLRQFELARSVQLRP) traverse the membrane as a helical segment. The pheophytin a site is built by Gln-130 and Asn-143. The helical transmembrane segment at 153-166 (VFVSVFLIYPLGQS) threads the bilayer. His-198 is a chlorophyll a binding site. Residues 208–228 (AALLCAIHGATVENTLFEDGD) form a helical membrane-spanning segment. Positions 215 and 262 each coordinate a plastoquinone. His-215 serves as a coordination point for Fe cation. A Fe cation-binding site is contributed by His-269. A helical transmembrane segment spans residues 279 to 295 (GLWMSALGVVGLALNLR).

The protein belongs to the reaction center PufL/M/PsbA/D family. As to quaternary structure, PSII is composed of 1 copy each of membrane proteins PsbA, PsbB, PsbC, PsbD, PsbE, PsbF, PsbH, PsbI, PsbJ, PsbK, PsbL, PsbM, PsbT, PsbX, PsbY, PsbZ, Psb30/Ycf12, at least 3 peripheral proteins of the oxygen-evolving complex and a large number of cofactors. It forms dimeric complexes. The D1/D2 heterodimer binds P680, chlorophylls that are the primary electron donor of PSII, and subsequent electron acceptors. It shares a non-heme iron and each subunit binds pheophytin, quinone, additional chlorophylls, carotenoids and lipids. There is also a Cl(-1) ion associated with D1 and D2, which is required for oxygen evolution. The PSII complex binds additional chlorophylls, carotenoids and specific lipids. serves as cofactor.

It is found in the plastid. Its subcellular location is the chloroplast thylakoid membrane. It carries out the reaction 2 a plastoquinone + 4 hnu + 2 H2O = 2 a plastoquinol + O2. In terms of biological role, photosystem II (PSII) is a light-driven water:plastoquinone oxidoreductase that uses light energy to abstract electrons from H(2)O, generating O(2) and a proton gradient subsequently used for ATP formation. It consists of a core antenna complex that captures photons, and an electron transfer chain that converts photonic excitation into a charge separation. The D1/D2 (PsbA/PsbD) reaction center heterodimer binds P680, the primary electron donor of PSII as well as several subsequent electron acceptors. D2 is needed for assembly of a stable PSII complex. This chain is Photosystem II D2 protein, found in Lactuca sativa (Garden lettuce).